The chain runs to 452 residues: GTPase Der (452 aa).

2 EngA-type G domains span residues 4–169 and 177–352; these read PIVA…PAPQ and IKVA…QEHR. Residues 10–17, 57–61, 120–123, 183–190, 230–234, and 295–298 each bind GTP; these read GRPNVGKS, DTGGL, NKCE, DTAGI, and NKWD. The 87-residue stretch at 353–439 folds into the KH-like domain; that stretch reads RRVTTAVINE…IRLFWRGKKV (87 aa).

This sequence belongs to the TRAFAC class TrmE-Era-EngA-EngB-Septin-like GTPase superfamily. EngA (Der) GTPase family. Associates with the 50S ribosomal subunit.

GTPase that plays an essential role in the late steps of ribosome biogenesis. The polypeptide is GTPase Der (Synechocystis sp. (strain ATCC 27184 / PCC 6803 / Kazusa)).